Reading from the N-terminus, the 3930-residue chain is Hybrid PKS-NRPS synthetase apdA (3930 aa).

One can recognise a Ketosynthase family 3 (KS3) domain in the interval 2–440 (QDLIAIVGSA…GTNAHAIIEG (439 aa)). Residues Cys176, His313, and His361 each act as for beta-ketoacyl synthase activity in the active site. The interval 557–879 (IFTGQGAQWA…MRRGDNEIEA (323 aa)) is malonyl-CoA:ACP transacylase (MAT) domain. The segment at 948–1085 (HELLGRRVPD…GRLIINYGDP (138 aa)) is N-terminal hotdog fold. Positions 948 to 1251 (HELLGRRVPD…SMKSMSEPQP (304 aa)) are dehydratase (DH) domain. The PKS/mFAS DH domain maps to 948-1252 (HELLGRRVPD…MKSMSEPQPE (305 aa)). His980 acts as the Proton acceptor; for dehydratase activity in catalysis. The segment at 1100–1252 (NVPVDMGRFY…MKSMSEPQPE (153 aa)) is C-terminal hotdog fold. The active-site Proton donor; for dehydratase activity is the Asp1159. Residues 1389–1588 (QDDMLNRFYM…FSGLDCLAPD (200 aa)) are methyltransferase (MT) domain. The segment at 2088-2229 (ATYLLAGMTG…SLASIIGNAA (142 aa)) is ketoreductase (KR) domain. Residues 2326 to 2403 (AVIPIVQEAF…QICEDAVRQF (78 aa)) form the Carrier 1 domain. Residue Ser2363 is modified to O-(pantetheine 4'-phosphoryl)serine. Disordered stretches follow at residues 2414 to 2433 (VAPN…SNAT) and 2444 to 2494 (DAAN…VDAD). Over residues 2445–2473 (AANGDYESSSQGDDSRGNSSSSSSHTSPS) the composition is skewed to low complexity. The segment at 2509–2937 (PASFAQSRLW…SLPVNQLPVT (429 aa)) is condensation (C) domain. Positions 2971–3371 (KSFPEETAIK…GTLIFMGRMD (401 aa)) are adenylation (A) (KR) domain. The interval 2971-3371 (KSFPEETAIK…GTLIFMGRMD (401 aa)) is reductase (RED) domain. Residues 3493–3572 (RHLSLAEGEL…QMARRISRRK (80 aa)) form the Carrier 2 domain. Ser3532 is subject to O-(pantetheine 4'-phosphoryl)serine.

This sequence in the C-terminal section; belongs to the NRP synthetase family.

The protein operates within secondary metabolite biosynthesis. Functionally, hybrid PKS-NRPS synthetase; part of the gene cluster that mediates the biosynthesis of aspyridones. The polyketide-amino acid backbone preaspyridone A is first assembled by the PKS-NRPS hybrid apdA. The assembly of preaspyridone A is initiated by loading of malonyl-CoA onto apdA, followed by decarboxylation to yield the acetyl starter unit. The growing polyketide chain then elongates into a tetraketide. The adpA PKS module catalyzes three Claisen condensations, as well as beta-keto processing and methylation. Alpha-methylation step during polyketide synthesis is a prerequisite and a key checkpoint for chain transfer between PKS and NRPS modules. The downstream NRPS module contains the condensation (C), adenylation (A), and thiolation (T) domains and catalyzes the incorporation of tyrosine via the formation of the L-tyrosinyl-thioester and the amide linkage between L-tyrosinyl-thioester and the tetraketide. The bimodular assembly line is terminated with a reductase (R) domain that facilitates formation and release of the tetramic acid product. Because apdA lacks a designated enoylreductase (ER) domain, the required activity is provided the enoyl reductase apdC. ApdC appears to operate with different stereoselectivity in different PKS cycle. Combined with apdC, apdA is proposed to synthesize preaspyridone A via about 20 enzymatic steps. A number of oxidative steps performed successively by the cytochrome P450 monooxygenases apdE and apdB are required for the conversion of preaspyridone A to aspyridone A. The cytochrome P450 monooxygenase apdE is responsible for the oxidative dephenylation of preaspyridone A. Finally, the predicted FAD-dependent monooxygenase apdD and the acyl-CoA dehydrogenase apdG may be involved in the transformation of aspyridone A into aspyridone B. In Emericella nidulans (strain FGSC A4 / ATCC 38163 / CBS 112.46 / NRRL 194 / M139) (Aspergillus nidulans), this protein is Hybrid PKS-NRPS synthetase apdA.